The primary structure comprises 206 residues: Putative type I restriction enzyme MpnIIP endonuclease subunit C-terminal part (206 aa).

Its function is as follows. The C-terminal section of a putative type I restriction enzyme that if reconstituted might recognize 5'-GAN(7)TAY-3' and cleave a random distance away. Subunit R is required for both nuclease and ATPase activities, but not for modification. The protein is Putative type I restriction enzyme MpnIIP endonuclease subunit C-terminal part of Mycoplasma pneumoniae (strain ATCC 29342 / M129 / Subtype 1) (Mycoplasmoides pneumoniae).